A 601-amino-acid polypeptide reads, in one-letter code: MTNKDARTPASSQTGEALASPQGDQEAGKSIGWHKAYVAGSRPDLRVPVRQVHLTNGESVTLYDTSGPYTDPSVDTDVRRGLAPLRENWIIARGDTEEYAGRPVRPEDDGIKHTSPRGGLRNLDAVFPGRPRQPRRGRDGQAVTQLAYARRGEITPEMEFVAVRENVSAEVVREEIAAGRAVMPVNVNHPEIEPMIIGKRFLVKVNANIGNSAVTSSIEEEVEKMTWATRWGADTVMDLSTGRNIHTTREWVLRNSPVPIGTVPLYQALEKVDGRAEELTWEIYKDTVIEQAEQGVDYMTVHAGVRLPYVPLTANRKTGIVSRGGSIMAAWCLAHHKESFLYENFEELCEILAAYDVTYSLGDGLRPGSIADANDEAQFAELRTLGELNRIAKRFNVQTMIEGPGHVPMHKIKENIDLQQEICDEAPFYTLGPLTTDVAPAYDHITSGIGAAMIAWWGTAMLCYVTPKEHLGLPNRDDVKTGVITYKIAAHAADLAKGHPGAQEWDDALSDARFEFRWEDQFNLALDPDTAREFHDETLPAEPAKTAHFCSMCGPKFCSMKISQDIRREHGGTRTEVEEGMAQKSKEFAAAGNRVYLPLAD.

Disordered regions lie at residues 1-31 (MTNK…GKSI) and 100-141 (AGRP…RDGQ). Residues 100–112 (AGRPVRPEDDGIK) are compositionally biased toward basic and acidic residues. Substrate contacts are provided by residues Asn208, Met237, Tyr266, His302, 322-324 (SRG), 363-366 (DGLR), and Glu402. His406 contributes to the Zn(2+) binding site. Tyr429 serves as a coordination point for substrate. His470 contacts Zn(2+). 3 residues coordinate [4Fe-4S] cluster: Cys550, Cys553, and Cys558.

It belongs to the ThiC family. Requires [4Fe-4S] cluster as cofactor.

It carries out the reaction 5-amino-1-(5-phospho-beta-D-ribosyl)imidazole + S-adenosyl-L-methionine = 4-amino-2-methyl-5-(phosphooxymethyl)pyrimidine + CO + 5'-deoxyadenosine + formate + L-methionine + 3 H(+). It participates in cofactor biosynthesis; thiamine diphosphate biosynthesis. Functionally, catalyzes the synthesis of the hydroxymethylpyrimidine phosphate (HMP-P) moiety of thiamine from aminoimidazole ribotide (AIR) in a radical S-adenosyl-L-methionine (SAM)-dependent reaction. The polypeptide is Phosphomethylpyrimidine synthase (Streptomyces avermitilis (strain ATCC 31267 / DSM 46492 / JCM 5070 / NBRC 14893 / NCIMB 12804 / NRRL 8165 / MA-4680)).